Consider the following 440-residue polypeptide: Chromosomal replication initiator protein DnaA (440 aa).

Residues 1-69 (MKERILQEIK…VKVVLGNDAT (69 aa)) form a domain I, interacts with DnaA modulators region. Positions 69-96 (TFEITYEAFEPHSSYSEPLVKKRAVLLT) are domain II. A domain III, AAA+ region region spans residues 97-313 (PLNPDYTFEN…GAIIKLLVYK (217 aa)). Residues glycine 140, glycine 142, lysine 143, and threonine 144 each contribute to the ATP site. The domain IV, binds dsDNA stretch occupies residues 314–440 (ETTGKEVDLK…GEISRRALSG (127 aa)).

It belongs to the DnaA family. Oligomerizes as a right-handed, spiral filament on DNA at oriC.

It localises to the cytoplasm. In terms of biological role, plays an essential role in the initiation and regulation of chromosomal replication. ATP-DnaA binds to the origin of replication (oriC) to initiate formation of the DNA replication initiation complex once per cell cycle. Binds the DnaA box (a 9 base pair repeat at the origin) and separates the double-stranded (ds)DNA. Forms a right-handed helical filament on oriC DNA; dsDNA binds to the exterior of the filament while single-stranded (ss)DNA is stabiized in the filament's interior. The ATP-DnaA-oriC complex binds and stabilizes one strand of the AT-rich DNA unwinding element (DUE), permitting loading of DNA polymerase. After initiation quickly degrades to an ADP-DnaA complex that is not apt for DNA replication. Binds acidic phospholipids. The chain is Chromosomal replication initiator protein DnaA from Thermotoga sp. (strain RQ2).